Here is a 364-residue protein sequence, read N- to C-terminus: MKRQLILEDGSFFVGERFGSLKETTGEVVFNTGMTGYQEILSDPSYCGQIVTMTYPLIGNYGINRDDFEAIRPHVHGFIVKEACVKPSNWRGELTLDEYLKEKGIPGLSGIDTRKLTRLIRQYGTLKGMICGLDVDPVEAAAKLRAMEWPRDQVRRVSTKSAYPSPGRGERIVLIDFGMKHGILRELNKRNCDVIVLPYNATAEEVLGWHPDGVMLSNGPGDPKDVPEAIEMIRGILGKVPLFGICLGHQLFALACGANTEKMKFGHRGSNHPVKDLRTGKVAITSQNHGYTVTHESLSGTRLEVTHIALNDGTVEGLRHLDVPAFTVQYHPEASPGPEDANPLFDEFLALIREFNKKGEVIHA.

2 CPSase regions span residues 1 to 167 (MKRQ…PSPG) and 1 to 171 (MKRQ…RGER). L-glutamine contacts are provided by serine 45, glycine 219, and glycine 221. The 188-residue stretch at 171 to 358 (RIVLIDFGMK…LALIREFNKK (188 aa)) folds into the Glutamine amidotransferase type-1 domain. The active-site Nucleophile is the cysteine 246. 5 residues coordinate L-glutamine: leucine 247, glutamine 250, asparagine 288, glycine 290, and tyrosine 291. Active-site residues include histidine 331 and glutamate 333.

It belongs to the CarA family. As to quaternary structure, composed of two chains; the small (or glutamine) chain promotes the hydrolysis of glutamine to ammonia, which is used by the large (or ammonia) chain to synthesize carbamoyl phosphate. Tetramer of heterodimers (alpha,beta)4.

It catalyses the reaction hydrogencarbonate + L-glutamine + 2 ATP + H2O = carbamoyl phosphate + L-glutamate + 2 ADP + phosphate + 2 H(+). The enzyme catalyses L-glutamine + H2O = L-glutamate + NH4(+). The protein operates within amino-acid biosynthesis; L-arginine biosynthesis; carbamoyl phosphate from bicarbonate: step 1/1. It participates in pyrimidine metabolism; UMP biosynthesis via de novo pathway; (S)-dihydroorotate from bicarbonate: step 1/3. Small subunit of the glutamine-dependent carbamoyl phosphate synthetase (CPSase). CPSase catalyzes the formation of carbamoyl phosphate from the ammonia moiety of glutamine, carbonate, and phosphate donated by ATP, constituting the first step of 2 biosynthetic pathways, one leading to arginine and/or urea and the other to pyrimidine nucleotides. The small subunit (glutamine amidotransferase) binds and cleaves glutamine to supply the large subunit with the substrate ammonia. The protein is Carbamoyl phosphate synthase small chain of Bacillus caldolyticus.